Reading from the N-terminus, the 806-residue chain is Exonuclease 1 (806 aa).

Residues 1-99 are N-domain; sequence MGIQGLLQFI…KSRRERRQAN (99 aa). The Mg(2+) site is built by D30, D78, E150, D152, D171, D173, and D225. The I-domain stretch occupies residues 138–229; the sequence is RTRGVDCVVA…ILSGCDYLQS (92 aa). 3 disordered regions span residues 337–426, 443–475, and 512–754; these read RIDD…EDTS, HCPE…PFRP, and ETQE…SPGL. The span at 355-378 shows a compositional bias: polar residues; it reads RSSSWNDRCDKTATTQASIWSQNY. Positions 412-425 are enriched in basic and acidic residues; that stretch reads PQRESQVKRPREDT. Polar residues-rich tracts occupy residues 447-458, 533-542, and 578-589; these read TQPTTKPLTNDN, SQSGGDTSSL, and WSGTTKELNKSV. Basic and acidic residues predominate over residues 592 to 601; that stretch reads PARDSTERQR. Positions 602 to 615 are enriched in polar residues; the sequence is SSSTPSGLSTLQQF. A compositionally biased stretch (low complexity) spans 651–670; that stretch reads SQDSAYFSQSSSISASVENS. Over residues 676–685 the composition is skewed to basic and acidic residues; it reads NSDKEKERDS. Positions 686 to 696 are enriched in low complexity; sequence VVSNSPSSSPL. Polar residues predominate over residues 744-754; the sequence is KNVNNENSPGL.

It belongs to the XPG/RAD2 endonuclease family. EXO1 subfamily. It depends on Mg(2+) as a cofactor.

Its subcellular location is the nucleus. Its function is as follows. 5'-&gt;3' double-stranded DNA exonuclease which may also contain a cryptic 3'-&gt;5' double-stranded DNA exonuclease activity. Also exhibits endonuclease activity against 5'-overhanging flap structures similar to those generated by displacement synthesis when DNA polymerase encounters the 5'-end of a downstream Okazaki fragment. Required for DNA mismatch repair (MMR). The chain is Exonuclease 1 (exo1) from Danio rerio (Zebrafish).